Reading from the N-terminus, the 280-residue chain is 2-dehydro-3-deoxyphosphooctonate aldolase (280 aa).

It belongs to the KdsA family.

It is found in the cytoplasm. The catalysed reaction is D-arabinose 5-phosphate + phosphoenolpyruvate + H2O = 3-deoxy-alpha-D-manno-2-octulosonate-8-phosphate + phosphate. The protein operates within carbohydrate biosynthesis; 3-deoxy-D-manno-octulosonate biosynthesis; 3-deoxy-D-manno-octulosonate from D-ribulose 5-phosphate: step 2/3. Its pathway is bacterial outer membrane biogenesis; lipopolysaccharide biosynthesis. This chain is 2-dehydro-3-deoxyphosphooctonate aldolase, found in Rhizobium meliloti (strain 1021) (Ensifer meliloti).